The primary structure comprises 1093 residues: Isoleucine--tRNA ligase, chloroplastic/mitochondrial (1093 aa).

A disordered region spans residues 69-103; that stretch reads PNNEFGHSSKRRSRGPVMAAKKASEGEKQEDGKYK. Over residues 90–103 the composition is skewed to basic and acidic residues; it reads KASEGEKQEDGKYK. Residues 155-165 carry the 'HIGH' region motif; that stretch reads PYANGDLHMGH. Residue Glu-682 participates in L-isoleucyl-5'-AMP binding. The short motif at 723–727 is the 'KMSKS' region element; sequence KMSKS. Residue Lys-726 coordinates ATP. Residues Cys-1050, Cys-1053, Cys-1070, and Cys-1073 each contribute to the Zn(2+) site.

The protein belongs to the class-I aminoacyl-tRNA synthetase family.

It localises to the plastid. The protein resides in the chloroplast. Its subcellular location is the mitochondrion. The enzyme catalyses tRNA(Ile) + L-isoleucine + ATP = L-isoleucyl-tRNA(Ile) + AMP + diphosphate. The chain is Isoleucine--tRNA ligase, chloroplastic/mitochondrial from Arabidopsis thaliana (Mouse-ear cress).